Reading from the N-terminus, the 296-residue chain is 33 kDa chaperonin (296 aa).

2 disulfides stabilise this stretch: C236–C238 and C269–C272.

This sequence belongs to the HSP33 family. Post-translationally, under oxidizing conditions two disulfide bonds are formed involving the reactive cysteines. Under reducing conditions zinc is bound to the reactive cysteines and the protein is inactive.

Its subcellular location is the cytoplasm. Its function is as follows. Redox regulated molecular chaperone. Protects both thermally unfolding and oxidatively damaged proteins from irreversible aggregation. Plays an important role in the bacterial defense system toward oxidative stress. The chain is 33 kDa chaperonin from Lactobacillus acidophilus (strain ATCC 700396 / NCK56 / N2 / NCFM).